Here is a 126-residue protein sequence, read N- to C-terminus: Apolipoprotein C-IV (126 aa).

An N-terminal signal peptide occupies residues 1–27 (MSLLRHRLQALPSLCLCVLVLACIGAC).

This sequence belongs to the apolipoprotein C4 family.

The protein localises to the secreted. Functionally, may participate in lipoprotein metabolism. This chain is Apolipoprotein C-IV (APOC4), found in Aotus nancymaae (Ma's night monkey).